The following is a 177-amino-acid chain: Ubiquinol-cytochrome c reductase iron-sulfur subunit (177 aa).

The chain crosses the membrane as a helical span at residues 18–38 (MVLTASSVAAVGAVCTLWPLV). The region spanning 88 to 175 (ARAVKMSELI…YTFISDKKIR (88 aa)) is the Rieske domain. 4 residues coordinate [2Fe-2S] cluster: C120, H122, C139, and H142. C125 and C141 form a disulfide bridge.

It belongs to the Rieske iron-sulfur protein family. In terms of assembly, the main subunits of complex b-c1 are: cytochrome b, cytochrome c1 and the Rieske protein. [2Fe-2S] cluster serves as cofactor.

Its subcellular location is the cell membrane. It carries out the reaction a quinol + 2 Fe(III)-[cytochrome c](out) = a quinone + 2 Fe(II)-[cytochrome c](out) + 2 H(+)(out). Component of the ubiquinol-cytochrome c reductase complex (complex III or cytochrome b-c1 complex), which is a respiratory chain that generates an electrochemical potential coupled to ATP synthesis. This is Ubiquinol-cytochrome c reductase iron-sulfur subunit (petA) from Rickettsia felis (strain ATCC VR-1525 / URRWXCal2) (Rickettsia azadi).